The chain runs to 371 residues: Putative F-box protein At1g58090 (371 aa).

The F-box domain maps to 1-46 (MVSKKLPLDLEEEILFRVPPRSLVRFRSVCREWNTLFKNKRFINKN).

This Arabidopsis thaliana (Mouse-ear cress) protein is Putative F-box protein At1g58090.